Reading from the N-terminus, the 57-residue chain is Large ribosomal subunit protein bL32 (57 aa).

The disordered stretch occupies residues 1–23; it reads MAVPKKKTSKSKRDKRRATWRHK.

The protein belongs to the bacterial ribosomal protein bL32 family.

This is Large ribosomal subunit protein bL32 from Nostoc sp. (strain PCC 7120 / SAG 25.82 / UTEX 2576).